Reading from the N-terminus, the 278-residue chain is N-terminal Xaa-Pro-Lys N-methyltransferase 2 (278 aa).

Residues Gly-123, Arg-128, Asp-145, 174-175 (LQ), Gln-190, and His-195 each bind S-adenosyl-L-methionine.

Belongs to the methyltransferase superfamily. NTM1 family.

Its subcellular location is the nucleus. The catalysed reaction is N-terminal L-alanyl-L-prolyl-L-lysyl-[protein] + S-adenosyl-L-methionine = N-terminal N-methyl-L-alanyl-L-prolyl-L-lysyl-[protein] + S-adenosyl-L-homocysteine + H(+). The enzyme catalyses N-terminal L-prolyl-L-prolyl-L-lysyl-[protein] + S-adenosyl-L-methionine = N-terminal N-methyl-L-prolyl-L-prolyl-L-lysyl-[protein] + S-adenosyl-L-homocysteine + H(+). It catalyses the reaction N-terminal L-seryl-L-prolyl-L-lysyl-[protein] + S-adenosyl-L-methionine = N-terminal N-methyl-L-seryl-L-prolyl-L-lysyl-[protein] + S-adenosyl-L-homocysteine + H(+). Alpha N-methyltransferase that methylates the N-terminus of target proteins containing the N-terminal motif [Ala/Pro/Ser]-Pro-Lys when the initiator Met is cleaved. Specifically catalyzes monomethylation of exposed alpha-amino group of Ala or Ser residue in the [Ala/Ser]-Pro-Lys motif and Pro in the Pro-Pro-Lys motif. Predominantly functions as a mono-methyltransferase but is also able to di-/tri-methylate the GPKRIA peptide and di-methylate the PPKRIA peptide (in vitro). May activate NTMT1 by priming its substrates for trimethylation. In Danio rerio (Zebrafish), this protein is N-terminal Xaa-Pro-Lys N-methyltransferase 2 (ntmt2).